The chain runs to 802 residues: Osmosensitive cation channel TMEM63C (802 aa).

The Extracellular segment spans residues Met1–Gly35. Residues Ile36–Ala60 traverse the membrane as a helical segment. Residues Ala61–Gly124 lie on the Cytoplasmic side of the membrane. 2 positions are modified to phosphoserine: Ser75 and Ser78. Residues Glu125–Tyr157 traverse the membrane as a helical segment. The Extracellular portion of the chain corresponds to Ile158–Ser180. The helical transmembrane segment at Gln181 to Cys205 threads the bilayer. The Cytoplasmic segment spans residues Leu206 to Arg401. Residues Phe402–Thr431 form a helical membrane-spanning segment. The Extracellular segment spans residues Ile432–Ser446. Residues Pro447 to Glu476 traverse the membrane as a helical segment. At Ala477–Thr480 the chain is on the cytoplasmic side. The chain crosses the membrane as a helical span at residues Arg481–Trp517. Over Leu518–Gly540 the chain is Extracellular. The chain crosses the membrane as a helical span at residues Ala541 to Phe573. Over Leu574–Gln593 the chain is Cytoplasmic. Residues Phe594–Ser612 form a helical membrane-spanning segment. At Ile613–Cys615 the chain is on the extracellular side. Residues Pro616–Ser640 form a helical membrane-spanning segment. Topologically, residues Tyr641–Asn647 are cytoplasmic. Residues Ala648 to Arg676 traverse the membrane as a helical segment. The Extracellular portion of the chain corresponds to Val677–His681. A helical transmembrane segment spans residues Ser682–Val702. Over Phe703–His802 the chain is Cytoplasmic. A disordered region spans residues Thr753 to Glu785.

The protein belongs to the CSC1 (TC 1.A.17) family. Monomer. In terms of tissue distribution, expressed in podocytes of kidney glomeruli.

The protein resides in the endoplasmic reticulum membrane. The protein localises to the cell membrane. It catalyses the reaction Ca(2+)(in) = Ca(2+)(out). In terms of biological role, acts as an osmosensitive cation channel preferentially activated upon hypotonic stress. In contrast to TMEM63B, does not show phospholipid scramblase activity. Enriched in mitochondria-ER contact sites where it may regulate the metabolite flux and organelles' morphologies in response to osmotic changes. In particular may regulate mitochondrial motility and function in motor neuron axons. Required for the functional integrity of the kidney glomerular filtration barrier. The chain is Osmosensitive cation channel TMEM63C (Tmem63c) from Rattus norvegicus (Rat).